The chain runs to 374 residues: Chaperone protein DnaJ (374 aa).

The J domain maps to 6-71 (DYYAVLEVTR…QKRAAYDRFG (66 aa)). The CR-type zinc finger occupies 130–209 (GVKKPITVPT…CHGAGTVERE (80 aa)). Residues Cys143, Cys146, Cys161, Cys164, Cys183, Cys186, Cys197, and Cys200 each contribute to the Zn(2+) site. 4 CXXCXGXG motif repeats span residues 143–150 (CESCEGTG), 161–168 (CPTCHGAG), 183–190 (CPTCHGAG), and 197–204 (CAACHGAG).

The protein belongs to the DnaJ family. In terms of assembly, homodimer. The cofactor is Zn(2+).

Its subcellular location is the cytoplasm. Functionally, participates actively in the response to hyperosmotic and heat shock by preventing the aggregation of stress-denatured proteins and by disaggregating proteins, also in an autonomous, DnaK-independent fashion. Unfolded proteins bind initially to DnaJ; upon interaction with the DnaJ-bound protein, DnaK hydrolyzes its bound ATP, resulting in the formation of a stable complex. GrpE releases ADP from DnaK; ATP binding to DnaK triggers the release of the substrate protein, thus completing the reaction cycle. Several rounds of ATP-dependent interactions between DnaJ, DnaK and GrpE are required for fully efficient folding. Also involved, together with DnaK and GrpE, in the DNA replication of plasmids through activation of initiation proteins. The sequence is that of Chaperone protein DnaJ from Gluconacetobacter diazotrophicus (strain ATCC 49037 / DSM 5601 / CCUG 37298 / CIP 103539 / LMG 7603 / PAl5).